The sequence spans 185 residues: Ribosome-recycling factor (185 aa).

It belongs to the RRF family.

It is found in the cytoplasm. Functionally, responsible for the release of ribosomes from messenger RNA at the termination of protein biosynthesis. May increase the efficiency of translation by recycling ribosomes from one round of translation to another. In Legionella pneumophila (strain Paris), this protein is Ribosome-recycling factor.